A 49-amino-acid polypeptide reads, in one-letter code: Isoflavone reductase homolog 2 (49 aa).

5-11 (GGTGYIG) contacts NADP(+).

Belongs to the NmrA-type oxidoreductase family. Isoflavone reductase subfamily.

The protein resides in the cytoplasm. The chain is Isoflavone reductase homolog 2 from Pseudotsuga menziesii (Douglas-fir).